Consider the following 166-residue polypeptide: SPbeta prophage-derived uncharacterized protein YomO (166 aa).

In Bacillus subtilis (strain 168), this protein is SPbeta prophage-derived uncharacterized protein YomO (yomO).